Here is a 125-residue protein sequence, read N- to C-terminus: MPTISQLIRKGRKTVASKSTAPALKECPQKRGVCTVVKTTTPKKPNSALRKIARVRLTNGYEVSAYIPGIGHNLQEHSVVLIRGGRVKDLPGVRYHIVRGALDSAGVADRLQGRSKYGAKRPKQK.

Asp89 carries the 3-methylthioaspartic acid modification.

The protein belongs to the universal ribosomal protein uS12 family. Part of the 30S ribosomal subunit. Contacts proteins S8 and S17. May interact with IF1 in the 30S initiation complex.

With S4 and S5 plays an important role in translational accuracy. Its function is as follows. Interacts with and stabilizes bases of the 16S rRNA that are involved in tRNA selection in the A site and with the mRNA backbone. Located at the interface of the 30S and 50S subunits, it traverses the body of the 30S subunit contacting proteins on the other side and probably holding the rRNA structure together. The combined cluster of proteins S8, S12 and S17 appears to hold together the shoulder and platform of the 30S subunit. This Clostridium kluyveri (strain ATCC 8527 / DSM 555 / NBRC 12016 / NCIMB 10680 / K1) protein is Small ribosomal subunit protein uS12.